The following is a 296-amino-acid chain: MNEQLLPDIAAQATHHDLPLHWVGMAGIALPIQLAGQALNASVDIGVSLDDAGARGIHMSRLYLALQGLAGKPLTLAALQHLLDDCLSSHHELSDSASLTVRGALPLQRPALVSQLSGWKHYPFEIHARQDGRGLHMELQVELDYSSTCPCSAALARQLIQQRFAESFAQQPLNYLDVLDWLGSTQGIVATPHSQRSTATLQLRLAADCIDLPLLALLEAAERALGTPVQTAVKRADEQAFALANGQNLMFCEDAARRLHRALRQLPQASAFRVRVVHAESLHAHDAVAESRWNWS.

This sequence belongs to the GTP cyclohydrolase IV family.

It carries out the reaction GTP + H2O = 7,8-dihydroneopterin 3'-triphosphate + formate + H(+). The protein operates within cofactor biosynthesis; 7,8-dihydroneopterin triphosphate biosynthesis; 7,8-dihydroneopterin triphosphate from GTP: step 1/1. In terms of biological role, converts GTP to 7,8-dihydroneopterin triphosphate. In Ectopseudomonas mendocina (strain ymp) (Pseudomonas mendocina), this protein is GTP cyclohydrolase FolE2.